A 712-amino-acid chain; its full sequence is DNA ligase (712 aa).

A disordered region spans residues M1–T22. Residues D53 to D57 and D138 each bind NAD(+). K140 (N6-AMP-lysine intermediate) is an active-site residue. Residues R161, E199, K318, and K342 each coordinate NAD(+). Residues C436, C439, C454, and C459 each coordinate Zn(2+). A disordered region spans residues R612–S631. A compositionally biased stretch (gly residues) spans G614 to A630. The BRCT domain occupies L629 to E712.

It belongs to the NAD-dependent DNA ligase family. LigA subfamily. The cofactor is Mg(2+). Mn(2+) is required as a cofactor.

It carries out the reaction NAD(+) + (deoxyribonucleotide)n-3'-hydroxyl + 5'-phospho-(deoxyribonucleotide)m = (deoxyribonucleotide)n+m + AMP + beta-nicotinamide D-nucleotide.. DNA ligase that catalyzes the formation of phosphodiester linkages between 5'-phosphoryl and 3'-hydroxyl groups in double-stranded DNA using NAD as a coenzyme and as the energy source for the reaction. It is essential for DNA replication and repair of damaged DNA. This Desulfovibrio desulfuricans (strain ATCC 27774 / DSM 6949 / MB) protein is DNA ligase.